The sequence spans 371 residues: MSLETFKHSEALTFGVELELQLVNRHDYDLAPFAPDLLRALKGAEHAGDIKPEISPSMIEISTGICHTYQQALEELTVMRDLMVAASRSLNLGIAGGGTHPFQQWADRTISDSPRYQYISELYGYLAKQFTVFGQHVHIGCPSADESLFLLHAIGRYVPHFVALAASSPYVQGVDTGFASARLNSVAAFPMSGRAPFLLTWDAFTAYFEKMRNTGVIESMKDFYWDIRPKPEFGTIEVRVMDTPLTVQRACDIAAYIQMLARYLLLSRPFMPQEDDYLVYTFNRFQACRFGLEGEYVHPNELTRMPIADHILSICDALVPHAEALGSLEALANIRALAERRDGDAEWLRQVDADARSQRETVRKACDRWAA.

This sequence belongs to the glutamate--cysteine ligase type 2 family. YbdK subfamily.

The enzyme catalyses L-cysteine + L-glutamate + ATP = gamma-L-glutamyl-L-cysteine + ADP + phosphate + H(+). In terms of biological role, ATP-dependent carboxylate-amine ligase which exhibits weak glutamate--cysteine ligase activity. The protein is Putative glutamate--cysteine ligase 2 of Cupriavidus necator (strain ATCC 17699 / DSM 428 / KCTC 22496 / NCIMB 10442 / H16 / Stanier 337) (Ralstonia eutropha).